The chain runs to 772 residues: Subtilisin-like protease SBT5.3 (772 aa).

Positions 1 to 25 are cleaved as a signal peptide; the sequence is MKLTHNFSFLLLLLLVHMSSKHILA. The Inhibitor I9 domain occupies 31 to 116; the sequence is SYVVYFGAHS…VFPNKALKLH (86 aa). The Peptidase S8 domain maps to 120–628; it reads SWDFLGLEHN…AGHVQPNLAV (509 aa). Asp-153 serves as the catalytic Charge relay system. A glycan (N-linked (GlcNAc...) asparagine) is linked at Asn-211. Residue His-223 is the Charge relay system of the active site. Residues Asn-246, Asn-306, and Asn-396 are each glycosylated (N-linked (GlcNAc...) asparagine). The 83-residue stretch at 398 to 480 folds into the PA domain; sequence SALDAQLCKL…KDSFAVSRYI (83 aa). The active-site Charge relay system is Ser-561. Residues Asn-606, Asn-651, Asn-662, Asn-684, and Asn-725 are each glycosylated (N-linked (GlcNAc...) asparagine).

Belongs to the peptidase S8 family. Expressed specifically at sites of lateral root emergence.

The protein localises to the secreted. Its subcellular location is the cell wall. Serine protease. Has a substrate preference for the hydrophobic residues Phe and Ala and the basic residue Asp in the P1 position, and for Asp, Leu or Ala in the P1' position. May play a role in the degradation of structural proteins in the extracellular matrix of cells located above sites of lateral root formation and thus facilitate lateral root emergence. The polypeptide is Subtilisin-like protease SBT5.3 (AIR3) (Arabidopsis thaliana (Mouse-ear cress)).